Reading from the N-terminus, the 226-residue chain is Exosome complex component rrp46 (226 aa).

The disordered stretch occupies residues 205–226 (NESDGHENEKNPKEDVEMDVVA). The span at 207–219 (SDGHENEKNPKED) shows a compositional bias: basic and acidic residues.

The protein belongs to the RNase PH family. As to quaternary structure, component of the RNA exosome complex. Specifically part of the catalytically inactive RNA exosome core complex (Exo-9) which may associate with the catalytic subunits rrp6 and dis3 in cytoplasmic- and nuclear-specific RNA exosome complex forms. Exo-9 is formed by a hexameric base ring of RNase PH domain-containing subunits and a cap ring consisting of csl4, rrp4 and rrp40.

It is found in the cytoplasm. The protein resides in the nucleus. The protein localises to the nucleolus. Functionally, non-catalytic component of the RNA exosome complex which has 3'-&gt;5' exoribonuclease activity and participates in a multitude of cellular RNA processing and degradation events. In the nucleus, the RNA exosome complex is involved in proper maturation of stable RNA species such as rRNA, snRNA and snoRNA, in the elimination of RNA processing by-products and non-coding 'pervasive' transcripts, such as antisense RNA species and cryptic unstable transcripts (CUTs), and of mRNAs with processing defects, thereby limiting or excluding their export to the cytoplasm. In the cytoplasm, the RNA exosome complex is involved in general mRNA turnover and in RNA surveillance pathways, preventing translation of aberrant mRNAs. The catalytic inactive RNA exosome core complex of 9 subunits (Exo-9) is proposed to play a pivotal role in the binding and presentation of RNA for ribonucleolysis, and to serve as a scaffold for the association with catalytic subunits and accessory proteins or complexes. ski6 is part of the hexameric ring of RNase PH domain-containing subunits proposed to form a central channel which threads RNA substrates for degradation. The polypeptide is Exosome complex component rrp46 (rrp46) (Schizosaccharomyces pombe (strain 972 / ATCC 24843) (Fission yeast)).